The sequence spans 111 residues: 2Fe-2S ferredoxin (111 aa).

Positions 1–104 (MPKVLFLPHK…DIEVEIPLYN (104 aa)) constitute a 2Fe-2S ferredoxin-type domain. [2Fe-2S] cluster-binding residues include Cys42, Cys48, Cys51, and Cys87.

Belongs to the adrenodoxin/putidaredoxin family. It depends on [2Fe-2S] cluster as a cofactor.

Its function is as follows. Ferredoxin are iron-sulfur proteins that transfer electrons in a wide variety of metabolic reactions. This chain is 2Fe-2S ferredoxin (fdx), found in Buchnera aphidicola subsp. Acyrthosiphon pisum (strain APS) (Acyrthosiphon pisum symbiotic bacterium).